The primary structure comprises 1074 residues: Probable arabinosyltransferase C (1074 aa).

Helical transmembrane passes span 15 to 37, 214 to 236, 251 to 273, 415 to 437, 452 to 474, 516 to 538, 573 to 595, 608 to 630, 645 to 667, and 684 to 706; these read ARLV…PLLP, LLKL…ALHV, SRWW…WHFV, IIIG…ALLV, RFGY…FLIF, SVAR…AMTL, THQF…VAVT, FGAA…WYVS, FGFT…WFHF, and LLVA…SLTL.

Belongs to the emb family.

The protein localises to the cell membrane. In terms of biological role, arabinosyl transferase responsible for the polymerization of arabinose into the arabinan of arabinogalactan. The polypeptide is Probable arabinosyltransferase C (embC) (Mycolicibacterium smegmatis (Mycobacterium smegmatis)).